The primary structure comprises 258 residues: Snake venom serine protease PTLE1 (258 aa).

An N-terminal signal peptide occupies residues 1–18 (MVLIRVLANLLILQLSYA). Positions 19 to 24 (QKSSEL) are excised as a propeptide. Residues 25 to 249 (VIGGDECNIN…YTDWIENIIA (225 aa)) enclose the Peptidase S1 domain. 6 cysteine pairs are disulfide-bonded: Cys31-Cys163, Cys50-Cys66, Cys98-Cys256, Cys142-Cys210, Cys174-Cys189, and Cys200-Cys225. N-linked (GlcNAc...) asparagine glycosylation is present at Asn44. The active-site Charge relay system is the His65. N-linked (GlcNAc...) asparagine glycosylation is found at Asn79 and Asn103. Asp110 functions as the Charge relay system in the catalytic mechanism. N-linked (GlcNAc...) asparagine glycosylation occurs at Asn121. Catalysis depends on Ser204, which acts as the Charge relay system.

The protein belongs to the peptidase S1 family. Snake venom subfamily. In terms of assembly, monomer. As to expression, expressed by the venom gland.

Its subcellular location is the secreted. Snake venom serine protease that may act in the hemostasis system of the prey. In Gloydius halys (Chinese water mocassin), this protein is Snake venom serine protease PTLE1.